The primary structure comprises 397 residues: Serpin B10 (397 aa).

Cys68 and Cys395 are oxidised to a cystine. The Nuclear localization signal signature appears at 74 to 77 (KKRK).

It belongs to the serpin family. Ov-serpin subfamily. As to expression, expressed specifically in myeloid cells and the bone marrow.

The protein resides in the nucleus. Its subcellular location is the cytoplasm. Functionally, protease inhibitor that may play a role in the regulation of protease activities during hematopoiesis and apoptosis induced by TNF. May regulate protease activities in the cytoplasm and in the nucleus. The protein is Serpin B10 (SERPINB10) of Homo sapiens (Human).